The sequence spans 424 residues: Cytoplasmic tRNA 2-thiolation protein 2 (424 aa).

The segment at 357-385 (PAAPETEEEEELSKKAHMEKSQEKTGDAD) is disordered. A compositionally biased stretch (basic and acidic residues) spans 368–385 (LSKKAHMEKSQEKTGDAD).

Belongs to the CTU2/NCS2 family.

Its subcellular location is the cytoplasm. It participates in tRNA modification; 5-methoxycarbonylmethyl-2-thiouridine-tRNA biosynthesis. Functionally, plays a central role in 2-thiolation of mcm(5)S(2)U at tRNA wobble positions of tRNA(Lys), tRNA(Glu) and tRNA(Gln). May act by forming a heterodimer with NCS6 that ligates sulfur from thiocarboxylated URM1 onto the uridine of tRNAs at wobble position. Prior mcm(5) tRNA modification by the elongator complex is required for 2-thiolation. May also be involved in protein urmylation. The polypeptide is Cytoplasmic tRNA 2-thiolation protein 2 (Yarrowia lipolytica (strain CLIB 122 / E 150) (Yeast)).